The sequence spans 199 residues: Transgelin-2 (199 aa).

Position 2 is an N-acetylalanine (A2). S11 carries the phosphoserine modification. K17 and K20 each carry N6-acetyllysine. Residues 24–136 (ADLEQILIQW…RTLMNLGGLA (113 aa)) enclose the Calponin-homology (CH) domain. S163 bears the Phosphoserine mark. Residue K171 forms a Glycyl lysine isopeptide (Lys-Gly) (interchain with G-Cter in SUMO2) linkage. One copy of the Calponin-like repeat lies at 174–199 (IGLQMGTNRGASQAGMTGYGMPRQIL). T180 bears the Phosphothreonine mark. R182 and R196 each carry omega-N-methylarginine.

This sequence belongs to the calponin family.

In Mus musculus (Mouse), this protein is Transgelin-2 (Tagln2).